Here is a 670-residue protein sequence, read N- to C-terminus: E3 ubiquitin-protein ligase MAG2 (670 aa).

2 disordered regions span residues 1-84 (MVEP…TSTR) and 124-145 (EVEREKSRSSSSKKSNRRRDEH). Positions 20-39 (DTLNATSNSSKQGVSNNKRN) are enriched in polar residues. The span at 51 to 66 (SDGRDNAHNYHGEGRR) shows a compositional bias: basic and acidic residues. The RING-type zinc finger occupies 195–250 (CSICLSEEPVAPRMVTCGHIFCLSCLLNFFSIEETVKNKETGYSKKKKYKECPLCG). The interval 609–670 (TEDEKASKEN…LFSSNHQALG (62 aa)) is disordered. The segment covering 610–622 (EDEKASKENKEFQ) has biased composition (basic and acidic residues). Low complexity predominate over residues 637-649 (VTDSTDSPPTSNG).

It belongs to the RNF10 family.

Its subcellular location is the cytoplasm. The enzyme catalyses S-ubiquitinyl-[E2 ubiquitin-conjugating enzyme]-L-cysteine + [acceptor protein]-L-lysine = [E2 ubiquitin-conjugating enzyme]-L-cysteine + N(6)-ubiquitinyl-[acceptor protein]-L-lysine.. It functions in the pathway protein modification; protein ubiquitination. E3 ubiquitin-protein ligase involved in the degradation of non-functional 18S rRNAs in response to stalled ribosomes. Catalyzes monoubiquitination of RPS3/uS3 in response to stalled ribosomes, initiating a HEL2-dependent response that activates the degradation of non-functional 18S rRNAs. The polypeptide is E3 ubiquitin-protein ligase MAG2 (Saccharomyces cerevisiae (strain ATCC 204508 / S288c) (Baker's yeast)).